We begin with the raw amino-acid sequence, 238 residues long: Ribonuclease PH (238 aa).

Phosphate contacts are provided by residues arginine 86 and 124–126; that span reads GTR.

This sequence belongs to the RNase PH family. Homohexameric ring arranged as a trimer of dimers.

It catalyses the reaction tRNA(n+1) + phosphate = tRNA(n) + a ribonucleoside 5'-diphosphate. In terms of biological role, phosphorolytic 3'-5' exoribonuclease that plays an important role in tRNA 3'-end maturation. Removes nucleotide residues following the 3'-CCA terminus of tRNAs; can also add nucleotides to the ends of RNA molecules by using nucleoside diphosphates as substrates, but this may not be physiologically important. Probably plays a role in initiation of 16S rRNA degradation (leading to ribosome degradation) during starvation. The protein is Ribonuclease PH of Psychrobacter arcticus (strain DSM 17307 / VKM B-2377 / 273-4).